A 124-amino-acid polypeptide reads, in one-letter code: Acidic phospholipase A2 (124 aa).

7 disulfide bridges follow: C26/C117, C28/C44, C43/C97, C49/C124, C50/C90, C57/C83, and C77/C88. 3 residues coordinate Ca(2+): Y27, G29, and G31. H47 is an active-site residue. D48 is a Ca(2+) binding site. E89 is an active-site residue.

It belongs to the phospholipase A2 family. Group II subfamily. D49 sub-subfamily. Ca(2+) serves as cofactor. Expressed by the venom gland.

The protein resides in the secreted. It carries out the reaction a 1,2-diacyl-sn-glycero-3-phosphocholine + H2O = a 1-acyl-sn-glycero-3-phosphocholine + a fatty acid + H(+). Functionally, snake venom phospholipase A2 (PLA2) that inhibits collagen- and ADP-induced platelet aggregation. PLA2 catalyzes the calcium-dependent hydrolysis of the 2-acyl groups in 3-sn-phosphoglycerides. In Bothrops jararaca (Jararaca), this protein is Acidic phospholipase A2.